A 966-amino-acid polypeptide reads, in one-letter code: Aminopeptidase N (966 aa).

Residues 1-8 (MAKGFYIS) lie on the Cytoplasmic side of the membrane. Residues 9 to 32 (KSLGILGILLGVAALCTIVALSVV) traverse the membrane as a helical; Signal-anchor for type II membrane protein segment. The interval 33–65 (YRQEKNKNTSQSPSMAPLNPTATSSPATTLDQN) is cytosolic Ser/Thr-rich junction. Topologically, residues 33–966 (YRQEKNKNTS…VLAWFTANSA (934 aa)) are extracellular. N-linked (GlcNAc...) asparagine glycosylation is found at N40 and N125. Residues 40–61 (NTSQSPSMAPLNPTATSSPATT) form a disordered region. The interval 66–966 (LPWNRYRLPK…VLAWFTANSA (901 aa)) is metalloprotease. Y173 is modified (sulfotyrosine). N-linked (GlcNAc...) asparagine glycosylation is found at N259 and N315. 348–352 (GAMEN) is a binding site for substrate. H384 serves as a coordination point for Zn(2+). The active-site Proton acceptor is the E385. Zn(2+) is bound by residues H388 and E407. Residues Y415 and Y420 each carry the sulfotyrosine modification. N-linked (GlcNAc...) asparagine glycosylation is found at N552, N570, N624, and N734. 2 disulfides stabilise this stretch: C760–C767 and C797–C833. N817 carries N-linked (GlcNAc...) asparagine glycosylation. Position 852 is a phosphotyrosine (Y852). Residue Y912 is modified to Sulfotyrosine.

This sequence belongs to the peptidase M1 family. As to quaternary structure, homodimer. Interacts with SLC6A19. Zn(2+) serves as cofactor. In terms of processing, sulfated. N- and O-glycosylated. Post-translationally, may undergo proteolysis and give rise to a soluble form.

The protein resides in the cell membrane. The catalysed reaction is Release of an N-terminal amino acid, Xaa-|-Yaa- from a peptide, amide or arylamide. Xaa is preferably Ala, but may be most amino acids including Pro (slow action). When a terminal hydrophobic residue is followed by a prolyl residue, the two may be released as an intact Xaa-Pro dipeptide.. Its function is as follows. Broad specificity aminopeptidase which plays a role in the final digestion of peptides generated from hydrolysis of proteins by gastric and pancreatic proteases. Also involved in the processing of various peptides including peptide hormones, such as angiotensin III and IV, neuropeptides, and chemokines. May also be involved the cleavage of peptides bound to major histocompatibility complex class II molecules of antigen presenting cells. May have a role in angiogenesis and promote cholesterol crystallization. May have a role in amino acid transport by acting as binding partner of amino acid transporter SLC6A19 and regulating its activity. This is Aminopeptidase N (ANPEP) from Oryctolagus cuniculus (Rabbit).